Here is a 240-residue protein sequence, read N- to C-terminus: MNSINKKEIEKFSKIAEEWWDPNGKFKPLHNFNPIRIRYIKENIIKDFKIRSSDKPLKNIKLLDIGCGGGLLSEPMCRLGASVVGIDASKKNIEVAKFHAKKNKLKIDYKVASPEMLKDKKKFDVILNMEIVEHVNDIDFFIKESSKLLKKNGIMFIATLNKTLKSYVFAIVGAEYILKWLPIGTHDWEKFVKPSELIDISKKNNLSLKKLDGMNFNILDNSWKVTNDTSVNYITKFIKN.

S-adenosyl-L-methionine contacts are provided by Arg-36, Gly-66, Asp-87, and Met-129.

The protein belongs to the methyltransferase superfamily. UbiG/COQ3 family.

The enzyme catalyses a 3-demethylubiquinol + S-adenosyl-L-methionine = a ubiquinol + S-adenosyl-L-homocysteine + H(+). It catalyses the reaction a 3-(all-trans-polyprenyl)benzene-1,2-diol + S-adenosyl-L-methionine = a 2-methoxy-6-(all-trans-polyprenyl)phenol + S-adenosyl-L-homocysteine + H(+). It functions in the pathway cofactor biosynthesis; ubiquinone biosynthesis. Functionally, O-methyltransferase that catalyzes the 2 O-methylation steps in the ubiquinone biosynthetic pathway. The sequence is that of Ubiquinone biosynthesis O-methyltransferase from Pelagibacter ubique (strain HTCC1062).